The following is a 155-amino-acid chain: Large ribosomal subunit protein uL30 (155 aa).

This sequence belongs to the universal ribosomal protein uL30 family. In terms of assembly, part of the 50S ribosomal subunit.

The sequence is that of Large ribosomal subunit protein uL30 from Nanoarchaeum equitans (strain Kin4-M).